We begin with the raw amino-acid sequence, 145 residues long: D-aminoacyl-tRNA deacylase (145 aa).

Residues 137–138 (GP) carry the Gly-cisPro motif, important for rejection of L-amino acids motif.

This sequence belongs to the DTD family. As to quaternary structure, homodimer.

The protein localises to the cytoplasm. The catalysed reaction is glycyl-tRNA(Ala) + H2O = tRNA(Ala) + glycine + H(+). The enzyme catalyses a D-aminoacyl-tRNA + H2O = a tRNA + a D-alpha-amino acid + H(+). Functionally, an aminoacyl-tRNA editing enzyme that deacylates mischarged D-aminoacyl-tRNAs. Also deacylates mischarged glycyl-tRNA(Ala), protecting cells against glycine mischarging by AlaRS. Acts via tRNA-based rather than protein-based catalysis; rejects L-amino acids rather than detecting D-amino acids in the active site. By recycling D-aminoacyl-tRNA to D-amino acids and free tRNA molecules, this enzyme counteracts the toxicity associated with the formation of D-aminoacyl-tRNA entities in vivo and helps enforce protein L-homochirality. This is D-aminoacyl-tRNA deacylase from Pseudomonas putida (strain ATCC 47054 / DSM 6125 / CFBP 8728 / NCIMB 11950 / KT2440).